A 325-amino-acid polypeptide reads, in one-letter code: NADH-ubiquinone oxidoreductase chain 1 (325 aa).

Transmembrane regions (helical) follow at residues V5 to L25, V79 to V99, I105 to G125, M144 to S164, I177 to E197, I237 to L257, I263 to V283, and V302 to Q322.

This sequence belongs to the complex I subunit 1 family.

Its subcellular location is the mitochondrion inner membrane. It catalyses the reaction a ubiquinone + NADH + 5 H(+)(in) = a ubiquinol + NAD(+) + 4 H(+)(out). Functionally, core subunit of the mitochondrial membrane respiratory chain NADH dehydrogenase (Complex I) that is believed to belong to the minimal assembly required for catalysis. Complex I functions in the transfer of electrons from NADH to the respiratory chain. The immediate electron acceptor for the enzyme is believed to be ubiquinone. This is NADH-ubiquinone oxidoreductase chain 1 (ND1) from Petunia hybrida (Petunia).